Here is a 303-residue protein sequence, read N- to C-terminus: N-acetyl-D-glucosamine kinase (303 aa).

ATP-binding positions include 4 to 11 (GFDMGGTK) and 133 to 140 (GVGGGLIV). The Zn(2+) site is built by His-157, Cys-177, Cys-179, and Cys-184.

Belongs to the ROK (NagC/XylR) family. NagK subfamily.

It carries out the reaction N-acetyl-D-glucosamine + ATP = N-acetyl-D-glucosamine 6-phosphate + ADP + H(+). Its pathway is cell wall biogenesis; peptidoglycan recycling. Its function is as follows. Catalyzes the phosphorylation of N-acetyl-D-glucosamine (GlcNAc) derived from cell-wall degradation, yielding GlcNAc-6-P. This Yersinia enterocolitica serotype O:8 / biotype 1B (strain NCTC 13174 / 8081) protein is N-acetyl-D-glucosamine kinase.